The following is a 670-amino-acid chain: UvrABC system protein B (670 aa).

Residues 26–183 (NGLKSGLAFQ…QRLVDLQYNR (158 aa)) form the Helicase ATP-binding domain. 39 to 46 (GVTGSGKT) lines the ATP pocket. The short motif at 92–115 (YYDYYQPEAYVPSSDSFIEKDAAI) is the Beta-hairpin element. The region spanning 431–597 (QVDDLLSEIN…GLSKQVNDVM (167 aa)) is the Helicase C-terminal domain. The UVR domain occupies 630-665 (LKQIALSEKQMFACAKNLEFEKAALFRDEVTKLHEQ).

The protein belongs to the UvrB family. As to quaternary structure, forms a heterotetramer with UvrA during the search for lesions. Interacts with UvrC in an incision complex.

The protein localises to the cytoplasm. In terms of biological role, the UvrABC repair system catalyzes the recognition and processing of DNA lesions. A damage recognition complex composed of 2 UvrA and 2 UvrB subunits scans DNA for abnormalities. Upon binding of the UvrA(2)B(2) complex to a putative damaged site, the DNA wraps around one UvrB monomer. DNA wrap is dependent on ATP binding by UvrB and probably causes local melting of the DNA helix, facilitating insertion of UvrB beta-hairpin between the DNA strands. Then UvrB probes one DNA strand for the presence of a lesion. If a lesion is found the UvrA subunits dissociate and the UvrB-DNA preincision complex is formed. This complex is subsequently bound by UvrC and the second UvrB is released. If no lesion is found, the DNA wraps around the other UvrB subunit that will check the other stand for damage. The sequence is that of UvrABC system protein B from Psychromonas ingrahamii (strain DSM 17664 / CCUG 51855 / 37).